Reading from the N-terminus, the 325-residue chain is UPF0285 protein Mbar_A0208 (325 aa).

Belongs to the UPF0285 family.

This is UPF0285 protein Mbar_A0208 from Methanosarcina barkeri (strain Fusaro / DSM 804).